Reading from the N-terminus, the 71-residue chain is Light-harvesting protein B-800/850 alpha chain (71 aa).

The Cytoplasmic portion of the chain corresponds to 1-15 (MNQGKVWRVVKPTVG). A helical membrane pass occupies residues 16–36 (VPVYLGAVAVTALILHGGLLA). His-31 is an a bacteriochlorophyll binding site. The Periplasmic segment spans residues 37-50 (KTDWFGAYWNGGKK). The helical transmembrane segment at 51–71 (AAAAAAAVAPAPVAAPQAPAQ) threads the bilayer.

The protein belongs to the antenna complex alpha subunit family. As to quaternary structure, an alpha/beta heterodimer conjugated to 3 bacteriochlorophyll molecules. The core complex is formed by different alpha and beta chains, binding bacteriochlorophyll molecules, and arranged most probably in tetrameric structures disposed around the reaction center. The non-pigmented gamma chains may constitute additional components.

The protein localises to the cell membrane. Antenna complexes are light-harvesting systems, which transfer the excitation energy to the reaction centers. This chain is Light-harvesting protein B-800/850 alpha chain (pucA), found in Rubrivivax gelatinosus (Rhodocyclus gelatinosus).